Here is a 639-residue protein sequence, read N- to C-terminus: Chaperone protein HtpG (639 aa).

The segment at 1 to 347 is a; substrate-binding; that stretch reads MSQQETHGFQ…SNDLPLNVSR (347 aa). A b region spans residues 348–564; it reads EILQDNKVTT…EGEMSTQMIK (217 aa). A c region spans residues 565–639; the sequence is LMQAAGQDVP…MNQMLLASVK (75 aa).

The protein belongs to the heat shock protein 90 family. Homodimer.

Its subcellular location is the cytoplasm. Functionally, molecular chaperone. Has ATPase activity. The sequence is that of Chaperone protein HtpG from Shewanella halifaxensis (strain HAW-EB4).